The primary structure comprises 469 residues: Argininosuccinate lyase (469 aa).

This sequence belongs to the lyase 1 family. Argininosuccinate lyase subfamily.

The protein localises to the cytoplasm. It carries out the reaction 2-(N(omega)-L-arginino)succinate = fumarate + L-arginine. Its pathway is amino-acid biosynthesis; L-arginine biosynthesis; L-arginine from L-ornithine and carbamoyl phosphate: step 3/3. The polypeptide is Argininosuccinate lyase (Mycolicibacterium smegmatis (strain ATCC 700084 / mc(2)155) (Mycobacterium smegmatis)).